Consider the following 173-residue polypeptide: HTH-type transcriptional regulator IscR (173 aa).

Residues 2 to 131 (RLTSKGRYAV…NNITLGELMM (130 aa)) form the HTH rrf2-type domain. Positions 28–51 (LADISERQGISLSYLEQLFSKLRK) form a DNA-binding region, H-T-H motif. Positions 92, 98, and 104 each coordinate [2Fe-2S] cluster.

Requires [2Fe-2S] cluster as cofactor.

Functionally, regulates the transcription of several operons and genes involved in the biogenesis of Fe-S clusters and Fe-S-containing proteins. The chain is HTH-type transcriptional regulator IscR from Vibrio cholerae serotype O1 (strain ATCC 39315 / El Tor Inaba N16961).